The sequence spans 327 residues: Tyrosine--tRNA ligase (327 aa).

Residue Tyr-33 participates in L-tyrosine binding. The 'HIGH' region signature appears at 38–46; it reads PSGVLHLGH. Residues Tyr-154, Gln-158, Asp-161, and Gln-176 each coordinate L-tyrosine. The 'KMSKS' region signature appears at 212–216; sequence KMSSS. Ser-215 is a binding site for ATP.

It belongs to the class-I aminoacyl-tRNA synthetase family. TyrS type 3 subfamily. Homodimer.

Its subcellular location is the cytoplasm. It carries out the reaction tRNA(Tyr) + L-tyrosine + ATP = L-tyrosyl-tRNA(Tyr) + AMP + diphosphate + H(+). In terms of biological role, catalyzes the attachment of tyrosine to tRNA(Tyr) in a two-step reaction: tyrosine is first activated by ATP to form Tyr-AMP and then transferred to the acceptor end of tRNA(Tyr). This chain is Tyrosine--tRNA ligase, found in Halobacterium salinarum (strain ATCC 29341 / DSM 671 / R1).